The sequence spans 67 residues: Large ribosomal subunit protein bL31 (67 aa).

The Zn(2+) site is built by Cys16, Cys18, Cys36, and Cys39.

It belongs to the bacterial ribosomal protein bL31 family. Type A subfamily. As to quaternary structure, part of the 50S ribosomal subunit. Requires Zn(2+) as cofactor.

Binds the 23S rRNA. The sequence is that of Large ribosomal subunit protein bL31 from Treponema pallidum (strain Nichols).